Consider the following 424-residue polypeptide: Elongation factor 1-alpha (424 aa).

The region spanning 5–223 (KPHMNLVIIG…NALQVPAKPV (219 aa)) is the tr-type G domain. Positions 14–21 (GHVDHGKS) are G1. Position 14 to 21 (14 to 21 (GHVDHGKS)) interacts with GTP. Residue Ser-21 participates in Mg(2+) binding. A G2 region spans residues 70–74 (GVTID). The tract at residues 91–94 (DAPG) is G3. GTP-binding positions include 91–95 (DAPGH) and 148–151 (NKMD). Positions 148 to 151 (NKMD) are G4. Residues 187 to 189 (SGY) are G5.

Belongs to the TRAFAC class translation factor GTPase superfamily. Classic translation factor GTPase family. EF-Tu/EF-1A subfamily.

The protein resides in the cytoplasm. It carries out the reaction GTP + H2O = GDP + phosphate + H(+). Its function is as follows. GTP hydrolase that promotes the GTP-dependent binding of aminoacyl-tRNA to the A-site of ribosomes during protein biosynthesis. This chain is Elongation factor 1-alpha, found in Picrophilus torridus (strain ATCC 700027 / DSM 9790 / JCM 10055 / NBRC 100828 / KAW 2/3).